Here is a 314-residue protein sequence, read N- to C-terminus: MDIEWFATGVGAVVVLYILYHFIRITLNILGPYVFCQPIDLKKKAGASWAVVTGATDGIGKSYSFELAKRGFNVYIVSRTQSKLEHTKKEILEVHPDIEVRFATFDFTNPSVSDYEKLLSKLNEVSIGILINNVGMFFDYPEMLHKINGGIDSIANVTIINTLPATLLSAGILPQMVPRKAGIIVNIGSVAGLATMAEWSVYSATKKYVEWITGCLQKEYGHQGIIFQAITPAMVATKMAGNPNTSFFTPDSDTFAKSALNTIGHASQTTGYITHQIECEMLKLLPDFVIDRSIKQTSAQLREALAKNENKPLM.

Residue 47–76 participates in NADP(+) binding; the sequence is ASWAVVTGATDGIGKSYSFELAKRGFNVYI. The active site involves tyrosine 202.

It belongs to the short-chain dehydrogenases/reductases (SDR) family. 17-beta-HSD 3 subfamily.

This Caenorhabditis elegans protein is Putative steroid dehydrogenase 1 (stdh-1).